The following is a 398-amino-acid chain: Apolipoprotein L1 (398 aa).

An N-terminal signal peptide occupies residues 1-27 (MEGAALLRVSVLCIWMSALFLGVGVRA). Residues 35 to 47 (QQNVPSGTDTGDP) are compositionally biased toward polar residues. Positions 35-55 (QQNVPSGTDTGDPQSKPLGDW) are disordered. Residue Asn261 is glycosylated (N-linked (GlcNAc...) asparagine). The interval 297–317 (PHASASRPRVTEPISAESGEQ) is disordered. 2 positions are modified to phosphoserine; by FAM20C: Ser311 and Ser314.

The protein belongs to the apolipoprotein L family. In plasma, interacts with APOA1 and mainly associated with large high density lipoprotein particles. In terms of processing, phosphorylated by FAM20C in the extracellular medium. As to expression, plasma. Found on APOA-I-containing high density lipoprotein (HDL3). Expressed in pancreas, lung, prostate, liver, placenta and spleen.

It is found in the secreted. In terms of biological role, may play a role in lipid exchange and transport throughout the body. May participate in reverse cholesterol transport from peripheral cells to the liver. This chain is Apolipoprotein L1 (APOL1), found in Homo sapiens (Human).